A 120-amino-acid polypeptide reads, in one-letter code: MSRKIDLLDRRRARVRRALRAAANGRPRLSVFRSSKQIYVQVIDDASGRTLAAASSLDKDLRARLKTGADKAAALEVGKLVAERAKAAGVTKVIFDRSGYLYHGRVKALADAAREGGLEF.

Belongs to the universal ribosomal protein uL18 family. Part of the 50S ribosomal subunit; part of the 5S rRNA/L5/L18/L25 subcomplex. Contacts the 5S and 23S rRNAs.

This is one of the proteins that bind and probably mediate the attachment of the 5S RNA into the large ribosomal subunit, where it forms part of the central protuberance. In Methylobacterium sp. (strain 4-46), this protein is Large ribosomal subunit protein uL18.